The primary structure comprises 282 residues: Ribosomal RNA small subunit methyltransferase I (282 aa).

Belongs to the methyltransferase superfamily. RsmI family.

It localises to the cytoplasm. It carries out the reaction cytidine(1402) in 16S rRNA + S-adenosyl-L-methionine = 2'-O-methylcytidine(1402) in 16S rRNA + S-adenosyl-L-homocysteine + H(+). Catalyzes the 2'-O-methylation of the ribose of cytidine 1402 (C1402) in 16S rRNA. In Buchnera aphidicola subsp. Acyrthosiphon pisum (strain APS) (Acyrthosiphon pisum symbiotic bacterium), this protein is Ribosomal RNA small subunit methyltransferase I.